We begin with the raw amino-acid sequence, 220 residues long: Splicing factor U2AF 26 kDa subunit (220 aa).

Ala2 carries the post-translational modification N-acetylalanine. The C3H1-type 1 zinc-finger motif lies at 12–40; the sequence is EKDKVNCSFYFKIGACRHGDRCSRLHNKP. The region spanning 65-147 is the RRM domain; it reads SHCHVSDVEV…QAVHAELSPV (83 aa). The segment at 149–176 adopts a C3H1-type 2 zinc-finger fold; the sequence is DFRESCCRQYEMGECTRGGFCNFMHLRP. The segment at 186–220 is disordered; sequence YGRGPRRRSPPRSHTGHRPRERNRRRSPDHRHGRF. The segment covering 189–220 has biased composition (basic residues); that stretch reads GPRRRSPPRSHTGHRPRERNRRRSPDHRHGRF.

Belongs to the splicing factor SR family. In terms of assembly, interacts with GFI1, U2AF2 and C1QBP.

The protein resides in the nucleus. It is found in the nucleus speckle. It localises to the cytoplasm. In terms of biological role, RNA-binding protein that function as a pre-mRNA splicing factor. Plays a critical role in both constitutive and enhancer-dependent splicing by mediating protein-protein interactions and protein-RNA interactions required for accurate 3'-splice site selection. Acts by enhancing the binding of U2AF2 to weak pyrimidine tracts. Also participates in the regulation of alternative pre-mRNA splicing. Activates exon 5 skipping of PTPRC during T-cell activation; an event reversed by GFI1. Binds to RNA at the AG dinucleotide at the 3'-splice site. Shows a preference for AGC or AGA. This Bos taurus (Bovine) protein is Splicing factor U2AF 26 kDa subunit (U2AF1L4).